A 254-amino-acid chain; its full sequence is Peptide methionine sulfoxide reductase A5 (254 aa).

Positions 1–33 (MAISLKRNRFFIPYTNLVFFFFLCVSLLDKTVS) are cleaved as a signal peptide.

This sequence belongs to the MsrA Met sulfoxide reductase family.

The enzyme catalyses L-methionyl-[protein] + [thioredoxin]-disulfide + H2O = L-methionyl-(S)-S-oxide-[protein] + [thioredoxin]-dithiol. The catalysed reaction is [thioredoxin]-disulfide + L-methionine + H2O = L-methionine (S)-S-oxide + [thioredoxin]-dithiol. Its function is as follows. Catalyzes the reduction of methionine sulfoxide (MetSO) to methionine in proteins. Plays a protective role against oxidative stress by restoring activity to proteins that have been inactivated by methionine oxidation. MSRA family specifically reduces the MetSO S-enantiomer. In Arabidopsis thaliana (Mouse-ear cress), this protein is Peptide methionine sulfoxide reductase A5 (MSRA5).